Consider the following 360-residue polypeptide: MAKVKIGINGFGRIGRLVARVILQSDDCELVAINDPFITTDYMTYMFKYDSVHGQWKHHELKVKDEKTLLFGERPVTVFGNRNPEEIPWGQTGADYVVESTGVFTDKDKAAAHLKGGAKKVIISAPSKDAPMFVVGVNEHEYKSELNIVSNASCTTNCLAPLAKVINDKFGIVEGLMTTVHSITATQKTVDGPSAKDWRGGRAASFNIIPSSTGAAKAVGKVLPALNGKLTGMSFRVPTVDVSVVDLTVRLEKEATYEQIKAAIKEESEGKMKGILGYTEDDVVSTDFVGDNRSSIFDAKAGICLNGNFVKLVSWYDNEWGYSSRVVDLIRHMSKTTSKLDSVALACVDAVSTLILSSEC.

Residues 13 to 14 (RI), D35, and R82 each bind NAD(+). D-glyceraldehyde 3-phosphate contacts are provided by residues 153 to 155 (SCT), T184, 213 to 214 (TG), and R236. The active-site Nucleophile is C154. Residue N318 participates in NAD(+) binding.

It belongs to the glyceraldehyde-3-phosphate dehydrogenase family. As to quaternary structure, homotetramer.

The catalysed reaction is D-glyceraldehyde 3-phosphate + phosphate + NAD(+) = (2R)-3-phospho-glyceroyl phosphate + NADH + H(+). Its pathway is carbohydrate degradation; glycolysis; pyruvate from D-glyceraldehyde 3-phosphate: step 1/5. Its function is as follows. Key enzyme in glycolysis that catalyzes the first step of the pathway by converting D-glyceraldehyde 3-phosphate (G3P) into 3-phospho-D-glyceroyl phosphate. Essential for the maintenance of cellular ATP levels and carbohydrate metabolism. In Atriplex nummularia (Old man saltbush), this protein is Glyceraldehyde-3-phosphate dehydrogenase.